We begin with the raw amino-acid sequence, 411 residues long: METPEVPVGSLIDFGPEAPTSSPLEAPPPVLQDGDGSLGDGASESETTESADSENDMGESPSHPSWDQDRRSSSNESFSSNQSTESTQDEETLALRDFMRGYVEKIFSGGEDLDQEEKAKFGEYCSSENGKGREWFARYVSAQRCNSKCVSEATFYRLVQSFAVVLFECHQMDDFGPAKNLMTMCFTYYHIGKPQLLPPESREKPAGSIDSYLKSANSWLAEKKDIAERLLKNTSARTENVKGFFGGLETKLKGPLARRNEEDENKPQEKRPRAVTAYSPEDEKKGEKIYLYTHLKQQPIWHTLRFWNAAFFDAVHCERTKRSPTTRGDAGEEEEKREKWCHMTQEERDDSLRFNENITFGQLGTFTHNMLAFGLNKKLCNDFLKKQAVIGNLDEEQYKLLSDHIEQMATE.

2 disordered regions span residues 1-91 (METP…QDEE) and 253-280 (KGPLARRNEEDENKPQEKRPRAVTAYSP). Residues 46–57 (ETTESADSENDM) are compositionally biased toward acidic residues. Residues 74-86 (SNESFSSNQSTES) are compositionally biased toward low complexity. The segment covering 258-272 (RRNEEDENKPQEKRP) has biased composition (basic and acidic residues). The residue at position 279 (Ser-279) is a Phosphoserine.

Widely expressed, highest levels in cerebellum, brain cortex, hippocampus, pons, putamen and amygdala. Highly expressed in neurons, but also present in glial cells. Slightly higher expression in the dorsolateral prefrontal cortex of schizophrenic patients compared to control individuals.

It is found in the cytoplasm. This is an uncharacterized protein from Homo sapiens (Human).